The following is a 249-amino-acid chain: Putative TrmH family tRNA/rRNA methyltransferase (249 aa).

Gly-196, Ile-216, and Leu-225 together coordinate S-adenosyl-L-methionine.

It belongs to the class IV-like SAM-binding methyltransferase superfamily. RNA methyltransferase TrmH family.

This Staphylococcus epidermidis (strain ATCC 35984 / DSM 28319 / BCRC 17069 / CCUG 31568 / BM 3577 / RP62A) protein is Putative TrmH family tRNA/rRNA methyltransferase.